The primary structure comprises 1120 residues: Hachiman protein HamB (1120 aa).

Residues 278-452 (DGELLKNDGF…WIGEDDKAKR (175 aa)) enclose the Helicase ATP-binding domain. 291–298 (MPTSSGKT) is an ATP binding site. The DEAH box motif lies at 395-398 (DEGH). One can recognise a Helicase C-terminal domain in the interval 521–710 (ATATKMLDVG…NIEKATSGLY (190 aa)).

This sequence belongs to the helicase family.

Its function is as follows. Component of antiviral defense system Hachiman, composed of HamA and HamB. Expression of Hachiman in B.subtilis (strain BEST7003) confers resistance to phages phi105, phi29, phi3T, rho14, SBSphiJ, SpBeta and SPR. Probably a helicase. The protein is Hachiman protein HamB of Bacillus cereus.